Consider the following 504-residue polypeptide: 2,3-bisphosphoglycerate-independent phosphoglycerate mutase (504 aa).

D11 and S61 together coordinate Mn(2+). S61 functions as the Phosphoserine intermediate in the catalytic mechanism. Residues H122, 152–153 (RD), R183, R189, 255–258 (RNDR), and K329 contribute to the substrate site. Residues D396, H400, D437, H438, and H455 each coordinate Mn(2+).

The protein belongs to the BPG-independent phosphoglycerate mutase family. In terms of assembly, monomer. Mn(2+) serves as cofactor.

The enzyme catalyses (2R)-2-phosphoglycerate = (2R)-3-phosphoglycerate. It functions in the pathway carbohydrate degradation; glycolysis; pyruvate from D-glyceraldehyde 3-phosphate: step 3/5. In terms of biological role, catalyzes the interconversion of 2-phosphoglycerate and 3-phosphoglycerate. The chain is 2,3-bisphosphoglycerate-independent phosphoglycerate mutase from Bacteroides fragilis (strain ATCC 25285 / DSM 2151 / CCUG 4856 / JCM 11019 / LMG 10263 / NCTC 9343 / Onslow / VPI 2553 / EN-2).